A 204-amino-acid polypeptide reads, in one-letter code: Small ribosomal subunit protein uS4 (204 aa).

The interval 20–46 (WGRPKSPINKREYGPGEHGQRRRKPSD) is disordered. The segment covering 28–38 (NKREYGPGEHG) has biased composition (basic and acidic residues). Residues 93-156 (TRLDAVVYRM…RQMPLILEAL (64 aa)) enclose the S4 RNA-binding domain.

The protein belongs to the universal ribosomal protein uS4 family. Part of the 30S ribosomal subunit. Contacts protein S5. The interaction surface between S4 and S5 is involved in control of translational fidelity.

One of the primary rRNA binding proteins, it binds directly to 16S rRNA where it nucleates assembly of the body of the 30S subunit. Functionally, with S5 and S12 plays an important role in translational accuracy. This chain is Small ribosomal subunit protein uS4, found in Rhodospirillum rubrum (strain ATCC 11170 / ATH 1.1.1 / DSM 467 / LMG 4362 / NCIMB 8255 / S1).